Here is a 1334-residue protein sequence, read N- to C-terminus: Aldehyde oxidase 4 (1334 aa).

The 88-residue stretch at 6-93 (DELIFFVNGK…GAAVTTVEGV (88 aa)) folds into the 2Fe-2S ferredoxin-type domain. The [2Fe-2S] cluster site is built by Cys-45, Cys-50, Cys-53, and Cys-75. Gln-114 serves as a coordination point for Mo-molybdopterin. [2Fe-2S] cluster-binding residues include Cys-115, Cys-118, Cys-150, and Cys-152. Cys-152 contacts Mo-molybdopterin. One can recognise an FAD-binding PCMH-type domain in the interval 235–421 (FQGERTIWIM…LSVFIPYSGQ (187 aa)). FAD-binding positions include 263 to 270 (LVMGNTAV), Ala-345, Thr-354, His-358, Asp-367, and Ala-411. Mo-molybdopterin contacts are provided by residues Ala-802, 802–803 (AF), Leu-1043, 1084–1087 (GSMG), Gln-1199, and Leu-1263. The active-site Proton acceptor; for azaheterocycle hydroxylase activity is Glu-1265.

The protein belongs to the xanthine dehydrogenase family. As to quaternary structure, homodimer. [2Fe-2S] cluster serves as cofactor. FAD is required as a cofactor. The cofactor is Mo-molybdopterin.

Its subcellular location is the cytoplasm. The catalysed reaction is an aldehyde + O2 + H2O = a carboxylate + H2O2 + H(+). It catalyses the reaction retinal + O2 + H2O = retinoate + H2O2 + H(+). In terms of biological role, aldehyde oxidase able to catalyze the oxidation of retinaldehyde into retinoate. Acts as a negative modulator of the epidermal trophism. May be able to oxidize a wide variety of aldehydes into their corresponding carboxylates and to hydroxylate azaheterocycles. The sequence is that of Aldehyde oxidase 4 (Aox4) from Rattus norvegicus (Rat).